Consider the following 191-residue polypeptide: UPF0149 protein VS_2635 (191 aa).

Belongs to the UPF0149 family.

The sequence is that of UPF0149 protein VS_2635 from Vibrio atlanticus (strain LGP32) (Vibrio splendidus (strain Mel32)).